The following is a 1209-amino-acid chain: Protein FAM83H (1209 aa).

The tract at residues 1–286 (MARRSQSSSQ…LFAQSEPLVP (286 aa)) is DUF1669. The segment at 1–286 (MARRSQSSSQ…LFAQSEPLVP (286 aa)) is mediates interaction with CSNK1A1 and is required for FAM83H activity in keratin cytoskeleton organization. A phosphoserine mark is found at S512, S513, S515, S522, S639, and S660. Disordered regions lie at residues 512–545 (SSASREVRHGSDPAFGPSPRGLEPSGASRPNLGQ), 615–664 (RDLL…FRSR), and 735–760 (KGPARDPGGAGGAVTSSSHSKAVVSQ). A Phosphothreonine modification is found at T749. Phosphoserine occurs at positions 752, 778, 806, and 871. A disordered region spans residues 829–1056 (AQGRSLSPQG…EERGSRVRLA (228 aa)). T873 carries the phosphothreonine modification. Residues S882, S893, S904, and S915 each carry the phosphoserine modification. Positions 915–942 (SPTSGFPNRRGSPTTGLMEQKGSPTSTY) are enriched in polar residues. The residue at position 917 (T917) is a Phosphothreonine. Position 926 is a phosphoserine (S926). Residue T928 is modified to Phosphothreonine. S937, S948, S959, S970, S977, S1035, S1041, and S1057 each carry phosphoserine. Position 1072 is a phosphothreonine (T1072). Disordered regions lie at residues 1076–1147 (LEQI…EERD) and 1174–1193 (EAGSSGAGDNLADEDTRDSK). 3 positions are modified to phosphoserine: S1080, S1098, and S1177.

Belongs to the FAM83 family. Directly interacts (via DUF1669) with casein kinase isoforms CSNK1A1, CSNK1A1L, CSNK1D and CSNK1E. Interaction with CSNK1A1 recruits CSNK1A1 to keratin filaments. Interacts with KRT18 and probably other keratins. Expressed in tooth follicle, eye, liver and kidney.

Its subcellular location is the cytoplasm. It localises to the cytoskeleton. Its function is as follows. May play a major role in the structural organization and calcification of developing enamel. May play a role in keratin cytoskeleton disassembly by recruiting CSNK1A1 to keratin filaments. Thereby, it may regulate epithelial cell migration. The polypeptide is Protein FAM83H (Mus musculus (Mouse)).